The sequence spans 347 residues: Glucose 1-dehydrogenase (347 aa).

Cys39 is a Zn(2+) binding site. A substrate-binding site is contributed by Thr41. Residues His64 and Glu65 each coordinate Zn(2+). Residues Glu110 and Glu146 each contribute to the substrate site. Zn(2+) is bound at residue Glu146. Residues 178 to 181, 260 to 262, and 289 to 291 contribute to the NADP(+) site; these read AGPV, LGV, and SVN. Substrate is bound at residue Asn291.

This sequence belongs to the zinc-containing alcohol dehydrogenase family. Glucose 1-dehydrogenase subfamily. Homodimer. It depends on Zn(2+) as a cofactor.

It catalyses the reaction D-glucose + NAD(+) = D-glucono-1,5-lactone + NADH + H(+). The enzyme catalyses D-glucose + NADP(+) = D-glucono-1,5-lactone + NADPH + H(+). In terms of biological role, catalyzes the NAD(P)(+)-dependent oxidation of D-glucose to D-gluconate via gluconolactone. To a lesser extent, is also active with xylose as substrate, but mannose, arabinose, galactose, fructose 6-phosphate, glucose 6-phosphate, glycerinaldehyde 3-phosphate, ribose, sorbitol, ethanol, erythritol, or lactose are not oxidized by the enzyme. Can utilize both NAD(+) and NADP(+) as electron acceptor, with a marked preference for NADP(+). Is involved in the degradation of glucose through a non-phosphorylative variant of the Entner-Doudoroff pathway. This Thermoproteus tenax (strain ATCC 35583 / DSM 2078 / JCM 9277 / NBRC 100435 / Kra 1) protein is Glucose 1-dehydrogenase (gdh).